The following is a 254-amino-acid chain: Imidazole glycerol phosphate synthase subunit HisF (254 aa).

Catalysis depends on residues Asp11 and Asp130.

This sequence belongs to the HisA/HisF family. Heterodimer of HisH and HisF.

It is found in the cytoplasm. The catalysed reaction is 5-[(5-phospho-1-deoxy-D-ribulos-1-ylimino)methylamino]-1-(5-phospho-beta-D-ribosyl)imidazole-4-carboxamide + L-glutamine = D-erythro-1-(imidazol-4-yl)glycerol 3-phosphate + 5-amino-1-(5-phospho-beta-D-ribosyl)imidazole-4-carboxamide + L-glutamate + H(+). It functions in the pathway amino-acid biosynthesis; L-histidine biosynthesis; L-histidine from 5-phospho-alpha-D-ribose 1-diphosphate: step 5/9. Its function is as follows. IGPS catalyzes the conversion of PRFAR and glutamine to IGP, AICAR and glutamate. The HisF subunit catalyzes the cyclization activity that produces IGP and AICAR from PRFAR using the ammonia provided by the HisH subunit. The polypeptide is Imidazole glycerol phosphate synthase subunit HisF (Trichlorobacter lovleyi (strain ATCC BAA-1151 / DSM 17278 / SZ) (Geobacter lovleyi)).